The primary structure comprises 1411 residues: Uveal autoantigen with coiled-coil domains and ankyrin repeats (1411 aa).

An N-acetylmethionine modification is found at Met-1. The segment at 1–30 (MKSLKSRLWKQDAPGPTSPSSPTAVASTQS) is disordered. Residues 13-30 (APGPTSPSSPTAVASTQS) are compositionally biased toward low complexity. ANK repeat units lie at residues 69-98 (EGRSAFHVVASKGNLECLNAILTHGIDVAT), 102-131 (AGRNALHLAAKYGHALCLQKLLQYNCPTEH), 135-164 (QGRTALHDAVMADCPSSIQLLCDHGASVNA), 168-197 (DGRTPLVLATQMCRPTICQLLIDRGADVNS), 201-230 (QNRTALMLGCEYGCRDAVEVLVKNGADLTL), and 234-263 (LGHDSSYYARIGDNLDILNLLKTASENTNK). Positions 263-301 (KGRELWRKGPPLQQRNLSHTQDEGSVKSTQREQREPHSF) are disordered. Ser-280 bears the Phosphoserine mark. Over residues 282–301 (TQDEGSVKSTQREQREPHSF) the composition is skewed to basic and acidic residues. Coiled coils occupy residues 299 to 379 (HSFQ…NRFK), 442 to 624 (SENE…LKEL), and 652 to 1380 (VKRL…AIYR). Residues 1006 to 1031 (GLKEQLSEQTHKCRQRDEEVKKGKQE) are disordered.

As to quaternary structure, component of the apoptosome complex, composed of APAF1, pro-caspase-9 and UACA. In the complex, it probably interacts directly with APAF1. Interacts with LGALS3, ARF6 and ACTB. Interacts with RAB39A. Highly expressed in heart, liver, kidney and testis. Weakly expressed in lung and skeletal muscle. Not expressed in brain and spleen.

It is found in the nucleus. It localises to the cytoplasm. Its subcellular location is the cytoskeleton. Its function is as follows. Regulates APAF1 expression and plays an important role in the regulation of stress-induced apoptosis. Promotes apoptosis by regulating three pathways, apoptosome up-regulation, LGALS3/galectin-3 down-regulation and NF-kappa-B inactivation. Regulates the redistribution of APAF1 into the nucleus after proapoptotic stress. Down-regulates the expression of LGALS3 by inhibiting NFKB1. Modulates isoactin dynamics to regulate the morphological alterations required for cell growth and motility. Interaction with ARF6 may modulate cell shape and motility after injury. May be involved in multiple neurite formation. The polypeptide is Uveal autoantigen with coiled-coil domains and ankyrin repeats (Uaca) (Mus musculus (Mouse)).